Consider the following 1194-residue polypeptide: Peroxisomal ATPase PEX1 (1194 aa).

Positions 220–255 are disordered; sequence KTRQRRMSHQGKSVKAKSLASTRHGKRRDDGSGPSG. Positions 221-234 are enriched in basic residues; it reads TRQRRMSHQGKSVK. The interval 538-730 is AAA-cassette D1; it reads RSASVLLTGA…GPEPTLKIEK (193 aa). ATP-binding positions include 546–553 and 849–856; these read GARGSGKT and GYPGCGKT. Residues 844–1028 form an AAA-cassette D2 region; it reads GLLLYGYPGC…LYNAHLEAIH (185 aa). Disordered stretches follow at residues 1062-1084, 1116-1139, and 1174-1194; these read YISF…LTNG, QVQQ…EPVI, and RSGE…SSLM. Over residues 1066–1084 the composition is skewed to polar residues; that stretch reads SMGNKDSTGEPSTQPLTNG. Positions 1116–1127 are enriched in low complexity; that stretch reads QVQQQQSQTNQA.

It belongs to the AAA ATPase family. Interacts with PEX6; forming the PEX1-PEX6 AAA ATPase complex, which is composed of a heterohexamer formed by a trimer of PEX1-PEX6 dimers.

The protein localises to the cytoplasm. It localises to the cytosol. Its subcellular location is the peroxisome membrane. The enzyme catalyses ATP + H2O = ADP + phosphate + H(+). Functionally, component of the PEX1-PEX6 AAA ATPase complex, a protein dislocase complex that mediates the ATP-dependent extraction of the PEX5 receptor from peroxisomal membranes, an essential step for PEX5 recycling. Specifically recognizes PEX5 monoubiquitinated at 'Cys-6', and pulls it out of the peroxisome lumen through the PEX2-PEX10-PEX12 retrotranslocation channel. Extraction by the PEX1-PEX6 AAA ATPase complex is accompanied by unfolding of the TPR repeats and release of bound cargo from PEX5. Regulates autophagy and biogenesis of peroxisomes and Woronin bodies. Plays important roles in mycelial growth and development and stress response. Is also essential for conidiation and fatty acid utilization. Required for nematode predation via trap formation. The protein is Peroxisomal ATPase PEX1 of Arthrobotrys oligospora (strain ATCC 24927 / CBS 115.81 / DSM 1491) (Nematode-trapping fungus).